A 176-amino-acid polypeptide reads, in one-letter code: Shikimate kinase (176 aa).

14–19 is a binding site for ATP; the sequence is GAGKST. Ser18 contributes to the Mg(2+) binding site. Substrate is bound by residues Asp36, Arg60, and Gly83. Residue Arg121 participates in ATP binding. Residue Arg140 participates in substrate binding.

Belongs to the shikimate kinase family. As to quaternary structure, monomer. The cofactor is Mg(2+).

It localises to the cytoplasm. It carries out the reaction shikimate + ATP = 3-phosphoshikimate + ADP + H(+). The protein operates within metabolic intermediate biosynthesis; chorismate biosynthesis; chorismate from D-erythrose 4-phosphate and phosphoenolpyruvate: step 5/7. Catalyzes the specific phosphorylation of the 3-hydroxyl group of shikimic acid using ATP as a cosubstrate. The polypeptide is Shikimate kinase (Francisella philomiragia subsp. philomiragia (strain ATCC 25017 / CCUG 19701 / FSC 153 / O#319-036)).